A 313-amino-acid chain; its full sequence is Protein MFI (313 aa).

In terms of assembly, can homodimerize. Interacts with MFF; the interaction inhibits MFF interaction with DNM1L. Enriched in the pancreatic beta cell and the testis and is expressed at low levels in other tissues tested.

It localises to the cytoplasm. The protein resides in the cytosol. The protein localises to the mitochondrion outer membrane. Its function is as follows. Acts as an inhibitor of mitochondrial fission. Interacts with MFF and prevents DNM1L recruitment to mitochondria, promoting a more fused mitochondrial network. In Homo sapiens (Human), this protein is Protein MFI.